The following is a 545-amino-acid chain: Reticulon-2 (545 aa).

Disordered regions lie at residues 1–183 (MGQV…ETGE) and 199–250 (SPEV…EREP). Over residues 14–25 (APSTASSTPDST) the composition is skewed to low complexity. Basic and acidic residues predominate over residues 32–43 (SDFRELHTAREF). The residue at position 44 (S44) is a Phosphoserine. The span at 135-146 (RPLEDLRLRLDH) shows a compositional bias: basic and acidic residues. The span at 157–166 (GEDSSTSSST) shows a compositional bias: low complexity. The span at 199–230 (SPEVLTPQLSPGSGTPQAGTPSPSRSRDSNSG) shows a compositional bias: polar residues. S227 and S229 each carry phosphoserine. The region spanning 345–545 (VADLLYWKDT…AVSGSKAKAE (201 aa)) is the Reticulon domain. 2 helical membrane-spanning segments follow: residues 368 to 388 (LLCL…LLLL) and 463 to 483 (LLFY…LLIL).

Interacts with isoform 1 but not isoform 3 of SPAST. Interacts with BACE1. Interacts (via first transmembrane domain) with ARL6IP5/GTRAP3-18. Interacts (via N-terminus) with SLC1A1/EAAC1; the interaction promotes cell surface expression of SLC1A1. As to quaternary structure, interacts with TMEM33. Highly expressed in skeletal muscle.

The protein localises to the endoplasmic reticulum membrane. The protein resides in the sarcoplasmic reticulum membrane. It is found in the cell membrane. It localises to the sarcolemma. Its subcellular location is the T-tubule. The protein localises to the cytoplasm. The protein resides in the myofibril. It is found in the sarcomere. It localises to the z line. Its subcellular location is the cytoskeleton. Its function is as follows. Inhibits amyloid precursor protein processing, probably by blocking BACE1 activity. Enhances trafficking of the glutamate transporter SLC1A1/EAAC1 from the endoplasmic reticulum to the cell surface. Plays a role in the translocation of SLC2A4/GLUT4 from intracellular membranes to the cell membrane which facilitates the uptake of glucose into the cell. The protein is Reticulon-2 (RTN2) of Homo sapiens (Human).